The sequence spans 534 residues: MWLLLQLVWLCFLLSLGLNSWHQSKVPEYPDELRCGLRSFQFTINPLSQETETPPVLVAWDNHGLPHSLQNDSDCGTWVSEGPGSSLVGEASYSGCYVTEWESYYIMTVGIERAGVSGSGAFIETKLFKCPVNLPDVPNAGLCDSVPVWDRLPCAPSPITQGDCKQLGCCYNSEEVISCYYGNTVTSHCTQDGHFSIAVSRNVTSPPLLLNSVHLAFRNDSECKPVMATHTFVLFRFPFTTCGTTKQITGKQAVYENELVAARDVRTWSRGSITRDSTFRLQVSCSYSASSSALPVNVQVLTLPPPLPETQPGNLTLELKIAKDKRYRSYYTASDYPVVKLLRDPIYVEVSIHQRTDPSLELRLDQCWATPGADALLQPQWPLLVNGCPYTGDNYQTKLIPVWEASDLPFPSHYQRFSISTFSFVDSVAKRALKGPVYLHCSASVCQPAGTPSCVTLCPARRRRSSDIHFQNNTASISSKGPLILLQAIQDSSEKLHKYSRSPVDSQALWVAGLSGILIVGALFMSYLAIRKWR.

An N-terminal signal peptide occupies residues methionine 1–glycine 17. Topologically, residues leucine 18–leucine 509 are extracellular. A glycan (N-linked (GlcNAc...) asparagine) is linked at asparagine 71. One can recognise a P-type domain in the interval glycine 141–asparagine 183. Positions histidine 188 to serine 465 constitute a ZP domain. Residues asparagine 202 and asparagine 219 are each glycosylated (N-linked (GlcNAc...) asparagine). O-linked (GalNAc...) serine glycosylation is present at serine 292. An O-linked (GalNAc...) threonine glycan is attached at threonine 302. Asparagine 314 carries N-linked (GlcNAc...) asparagine glycosylation. A disulfide bond links cysteine 367 and cysteine 441. Residues arginine 462–arginine 534 constitute a propeptide, removed in mature form. N-linked (GlcNAc...) asparagine glycosylation is present at asparagine 472. The helical transmembrane segment at tryptophan 510–isoleucine 530 threads the bilayer. Topologically, residues arginine 531–arginine 534 are cytoplasmic.

The protein belongs to the ZP domain family. ZPB subfamily. In terms of processing, proteolytically cleaved before the transmembrane segment to yield the secreted ectodomain incorporated in the zona pellucida. The N-terminus is blocked. Post-translationally, contains disulfide bond(s). Expressed in oocytes.

The protein resides in the zona pellucida. It localises to the cell membrane. Its function is as follows. Component of the zona pellucida, an extracellular matrix surrounding oocytes which mediates sperm binding, induction of the acrosome reaction and prevents post-fertilization polyspermy. The zona pellucida is composed of 3 to 4 glycoproteins, ZP1, ZP2, ZP3, and ZP4. ZP4 may act as a sperm receptor. The sequence is that of Zona pellucida sperm-binding protein 4 (ZP4) from Bos taurus (Bovine).